The primary structure comprises 518 residues: MTQHDRLLIIDFGSQVTQLIARRLRELNVYCEIHPYQNVTEAFLKGFAPKAVIFSGGPSSVFAEGAPMPPAGVFDLGVPILGICYGQQVMMHCLGGKVERGHGTAEFGRAFVTPTAERLAILDGWFEEGREQVWMSHGDHVSQIAPGFQVFGTSPNAPFAITGDPARHFYAVQFHPEVHHTPKGAKLYENFVRLAGFKGDWTMGAYREEAIARIRAQVGDQKVICGLSGGVDSSVAAVLIHEAIGDQLTCVFVDHGLLRLGEAEQVVKMFRDHYNMPLIHADESDLFLGALEGVSDPEVKRKTIGRLFIDVFQKHAADVGGATFLAQGTLYPDVIESVSFSGGPSVTIKSHHNVGGLPEKMGLKLVEPLRELFKDEVRALGRELGLPESFIGRHPFPGPGLAIRCPGEITREKLEILRRADAVYIDQIRRHGLYDEIWQAFVALLPVRTVGVMGDGRTYDYACALRAVTSVDGMTADYYPFTHDFLGETATRIINEVQGINRVTYDITSKPPGTIEWE.

In terms of domain architecture, Glutamine amidotransferase type-1 spans Arg-6–Asp-200. Residue Cys-84 is the Nucleophile of the active site. Residues His-175 and Glu-177 contribute to the active site. One can recognise a GMPS ATP-PPase domain in the interval Trp-201–Arg-393. An ATP-binding site is contributed by Ser-228–Ser-234.

As to quaternary structure, homodimer.

The enzyme catalyses XMP + L-glutamine + ATP + H2O = GMP + L-glutamate + AMP + diphosphate + 2 H(+). It functions in the pathway purine metabolism; GMP biosynthesis; GMP from XMP (L-Gln route): step 1/1. In terms of biological role, catalyzes the synthesis of GMP from XMP. The polypeptide is GMP synthase [glutamine-hydrolyzing] (Cereibacter sphaeroides (strain ATCC 17023 / DSM 158 / JCM 6121 / CCUG 31486 / LMG 2827 / NBRC 12203 / NCIMB 8253 / ATH 2.4.1.) (Rhodobacter sphaeroides)).